The primary structure comprises 101 residues: Apolipoprotein C-II (101 aa).

A signal peptide spans 1–22 (MGTRFLLALFLVLLVLGFEVQG). The segment at 66–74 (TVDEKLRDM) is lipid binding. The segment at 78 to 101 (STAAMSTYAGILTDQVLSMLKGEE) is lipoprotein lipase cofactor.

Belongs to the apolipoprotein C2 family. In terms of processing, proapolipoprotein C-II is synthesized as a sialic acid containing glycoprotein which is subsequently desialylated prior to its proteolytic processing. Post-translationally, proapolipoprotein C-II, the major form found in plasma undergoes proteolytic cleavage of its N-terminal hexapeptide to generate apolipoprotein C-II, which occurs as the minor form in plasma.

The protein resides in the secreted. Component of chylomicrons, very low-density lipoproteins (VLDL), low-density lipoproteins (LDL), and high-density lipoproteins (HDL) in plasma. Plays an important role in lipoprotein metabolism as an activator of lipoprotein lipase. Both proapolipoprotein C-II and apolipoprotein C-II can activate lipoprotein lipase. This is Apolipoprotein C-II (APOC2) from Aotus nancymaae (Ma's night monkey).